The sequence spans 191 residues: UPF0398 protein LCABL_17010 (191 aa).

It belongs to the UPF0398 family.

The chain is UPF0398 protein LCABL_17010 from Lacticaseibacillus casei (strain BL23) (Lactobacillus casei).